We begin with the raw amino-acid sequence, 287 residues long: Histone H1 (287 aa).

Positions 1–11 are enriched in low complexity; it reads MATEEPVIVNE. 2 disordered regions span residues 1–58 and 120–287; these read MATE…THPP and YKLP…RGRK. Positions 33–51 are enriched in basic residues; the sequence is GKAKKETKAKKPAAPRKRS. In terms of domain architecture, H15 spans 55–124; the sequence is THPPYFEMIK…KVKNSYKLPS (70 aa). The segment covering 135–202 has biased composition (basic residues); sequence AKKKPAAAKS…KAKPVAKAKP (68 aa). A compositionally biased stretch (low complexity) spans 203 to 248; sequence KAAAAAKPKAAVKPKAAPAKTKAAVKPNLKAKTTTAKVAKTATRTT. A compositionally biased stretch (basic residues) spans 276-287; the sequence is PAKKATPKRGRK.

The protein belongs to the histone H1/H5 family.

It is found in the nucleus. It localises to the chromosome. In terms of biological role, histones H1 are necessary for the condensation of nucleosome chains into higher-order structures. In Solanum lycopersicum (Tomato), this protein is Histone H1.